The following is a 130-amino-acid chain: Ribosome-binding factor A (130 aa).

The segment at 111–130 (RDLDDVGPEATSSDEDAEQR) is disordered.

This sequence belongs to the RbfA family. As to quaternary structure, monomer. Binds 30S ribosomal subunits, but not 50S ribosomal subunits or 70S ribosomes.

The protein resides in the cytoplasm. In terms of biological role, one of several proteins that assist in the late maturation steps of the functional core of the 30S ribosomal subunit. Associates with free 30S ribosomal subunits (but not with 30S subunits that are part of 70S ribosomes or polysomes). Required for efficient processing of 16S rRNA. May interact with the 5'-terminal helix region of 16S rRNA. This chain is Ribosome-binding factor A, found in Xanthomonas axonopodis pv. citri (strain 306).